Consider the following 179-residue polypeptide: Cytochrome b6-f complex iron-sulfur subunit (179 aa).

A helical transmembrane segment spans residues 20 to 42; that stretch reads LLTFGTITGVAAGALYPIVKYFI. In terms of domain architecture, Rieske spans 60-161; it reads GNDVIVSQFL…ANVTDNDKVV (102 aa). [2Fe-2S] cluster-binding residues include Cys-107, His-109, Cys-125, and His-128. Cys-112 and Cys-127 are disulfide-bonded.

The protein belongs to the Rieske iron-sulfur protein family. In terms of assembly, the 4 large subunits of the cytochrome b6-f complex are cytochrome b6, subunit IV (17 kDa polypeptide, PetD), cytochrome f and the Rieske protein, while the 4 small subunits are PetG, PetL, PetM and PetN. The complex functions as a dimer. The cofactor is [2Fe-2S] cluster.

Its subcellular location is the cellular thylakoid membrane. The catalysed reaction is 2 oxidized [plastocyanin] + a plastoquinol + 2 H(+)(in) = 2 reduced [plastocyanin] + a plastoquinone + 4 H(+)(out). Component of the cytochrome b6-f complex, which mediates electron transfer between photosystem II (PSII) and photosystem I (PSI), cyclic electron flow around PSI, and state transitions. The chain is Cytochrome b6-f complex iron-sulfur subunit from Microcystis aeruginosa (strain NIES-843 / IAM M-2473).